The primary structure comprises 205 residues: Heme-binding protein 2 (205 aa).

A disordered region spans residues 1-39 (MAEPLQPDPGAAEDAAAQAVETPGWKAPEDAGPQPGSYE). The residue at position 2 (alanine 2) is an N-acetylalanine. Phosphoserine is present on serine 181.

Belongs to the HEBP family. As to quaternary structure, monomer. Interacts with LRPPRC. May interact with BCL2L1; an interaction with BCL2L1 was observed using a peptide, but not with the full-length protein. The full-length protein would have to undergo a major conformation change for the interaction to occur. Interacts with PDCD6. As to expression, detected in placenta.

Its subcellular location is the cytoplasm. It localises to the mitochondrion. In terms of biological role, can promote mitochondrial permeability transition and facilitate necrotic cell death under different types of stress conditions. This chain is Heme-binding protein 2 (HEBP2), found in Homo sapiens (Human).